The following is a 145-amino-acid chain: MELPLGSDLARLVRVWRALVDHRLKPLELTQTHWVTLHNIYHLPPGQSQIQLAKAIGIEQPSLVRTLDQLEEKGLITRHVCAHDRRAKRIMLTESAEPIIQAVNGVISHTRSEVLFGITPEQVDELALLVSRLEKNILALHENQA.

An HTH marR-type domain is found at 2–135 (ELPLGSDLAR…LALLVSRLEK (134 aa)). Positions 49 to 72 (QIQLAKAIGIEQPSLVRTLDQLEE) form a DNA-binding region, H-T-H motif.

It belongs to the SlyA family. Homodimer.

Transcription regulator that can specifically activate or repress expression of target genes. Regulates genes involved in production of antibiotic and exoenzyme virulence determinants in the phytopathogen. Required for the expression of the virulence protein evf during Drosophila melanogaster infection. The sequence is that of Transcriptional regulator SlyA from Pectobacterium carotovorum subsp. carotovorum (Erwinia carotovora subsp. carotovora).